The following is a 132-amino-acid chain: MGLIVYYSSATGNTEHFVSQLGQRLFKIDKRKPSAFVGEPYVLVVPTYADGEGRGAVPKAVIHFLNEAENRKLIRGVIGSGNRNFGRYYSLASKIIAEKCGVPCLYRFELRGTDEDVICVKKGLERFWKQLG.

It belongs to the NrdI family.

Probably involved in ribonucleotide reductase function. The sequence is that of Protein NrdI from Bartonella tribocorum (strain CIP 105476 / IBS 506).